The sequence spans 30 residues: Beta-endorphin-2 (30 aa).

N-acetyltyrosine is present on Tyr-1.

It belongs to the POMC family.

The protein localises to the secreted. The chain is Beta-endorphin-2 from Oncorhynchus keta (Chum salmon).